The sequence spans 206 residues: Cytochrome b6-f complex iron-sulfur subunit, chloroplastic (206 aa).

The N-terminal 29 residues, 1–29 (MAMLSSRRVAAPAKASAIRRSRVMPVVRA), are a transit peptide targeting the chloroplast. Residues 39–68 (MNKRNIMNLILAGGAGLPITTLALGYGAFF) form a helical membrane-spanning segment. In terms of domain architecture, Rieske spans 92–188 (AGEWLKTHLA…CDVAESGLVT (97 aa)). Positions 134, 136, 152, and 155 each coordinate [2Fe-2S] cluster. Residues cysteine 139 and cysteine 154 are joined by a disulfide bond.

Belongs to the Rieske iron-sulfur protein family. As to quaternary structure, the 4 large subunits of the cytochrome b6-f complex are cytochrome b6, subunit IV (17 kDa polypeptide, petD), cytochrome f and the Rieske protein, while the 4 small subunits are petG, petL, petM and petN. The complex functions as a dimer. It depends on [2Fe-2S] cluster as a cofactor.

It localises to the plastid. It is found in the chloroplast thylakoid membrane. It carries out the reaction 2 oxidized [plastocyanin] + a plastoquinol + 2 H(+)(in) = 2 reduced [plastocyanin] + a plastoquinone + 4 H(+)(out). Functionally, component of the cytochrome b6-f complex, which mediates electron transfer between photosystem II (PSII) and photosystem I (PSI), cyclic electron flow around PSI, and state transitions. This Chlamydomonas reinhardtii (Chlamydomonas smithii) protein is Cytochrome b6-f complex iron-sulfur subunit, chloroplastic (petC).